Consider the following 396-residue polypeptide: 2-(3-amino-3-carboxypropyl)histidine synthase subunit 1 (396 aa).

Cys-89, Cys-194, and Cys-323 together coordinate [4Fe-4S] cluster. A disordered region spans residues 372–396 (TNNNEANRPKREKRKPHIVVRTEAS).

This sequence belongs to the DPH1/DPH2 family. DPH1 subfamily. Component of the 2-(3-amino-3-carboxypropyl)histidine synthase complex composed of dph-1, dph-2, dph-3 and a NADH-dependent reductase. [4Fe-4S] cluster serves as cofactor.

The catalysed reaction is L-histidyl-[translation elongation factor 2] + S-adenosyl-L-methionine = 2-[(3S)-amino-3-carboxypropyl]-L-histidyl-[translation elongation factor 2] + S-methyl-5'-thioadenosine + H(+). The protein operates within protein modification; peptidyl-diphthamide biosynthesis. Catalyzes the first step of diphthamide biosynthesis, a post-translational modification of histidine which occurs in elongation factor 2. Dph-1 and dph-2 transfer a 3-amino-3-carboxypropyl (ACP) group from S-adenosyl-L-methionine (SAM) to a histidine residue, the reaction is assisted by a reduction system comprising dph-3 and a NADH-dependent reductase. The sequence is that of 2-(3-amino-3-carboxypropyl)histidine synthase subunit 1 (dph-1) from Caenorhabditis elegans.